The sequence spans 321 residues: uncharacterized protein (321 aa).

A signal peptide spans 1-22; that stretch reads MKSIYKYTFMLFVFLFGTLMMA.

Belongs to the bacterial solute-binding protein 1 family. WtpA subfamily.

This is an uncharacterized protein from Petrotoga mobilis (strain DSM 10674 / SJ95).